Consider the following 288-residue polypeptide: MVNIEIDEGSGFCFGVTTAIRKAEEELAKGNTLYCLGDIVHNGQECERLKKMGLITINHEEFAQLHDAKVLLRAHGEPPETYAIARTNNIEIIDATCPVVLRLQKRIKQEYDNVPASQDTQIVIYGKNGHAEVLGLVGQTHGKAIVIETPAEAAHLDFTKDIRLYSQTTKSLEEFWQIIEYIKEHISPDATFEYYDTICRQVANRMPNIRKFAAAHDLIFFVCGRKSSNGKILYQECKKINPNSYLIDQPEEIDRNLLEDVRSIGICGATSTPKWLMEECKKAILNEK.

Cys13 is a binding site for [4Fe-4S] cluster. (2E)-4-hydroxy-3-methylbut-2-enyl diphosphate contacts are provided by His41 and His75. 2 residues coordinate dimethylallyl diphosphate: His41 and His75. Residues His41 and His75 each coordinate isopentenyl diphosphate. Cys97 is a binding site for [4Fe-4S] cluster. (2E)-4-hydroxy-3-methylbut-2-enyl diphosphate is bound at residue His130. His130 is a dimethylallyl diphosphate binding site. His130 is a binding site for isopentenyl diphosphate. Glu132 (proton donor) is an active-site residue. Thr168 provides a ligand contact to (2E)-4-hydroxy-3-methylbut-2-enyl diphosphate. Cys199 is a binding site for [4Fe-4S] cluster. Positions 227, 228, 229, and 271 each coordinate (2E)-4-hydroxy-3-methylbut-2-enyl diphosphate. 4 residues coordinate dimethylallyl diphosphate: Ser227, Ser228, Asn229, and Ser271. The isopentenyl diphosphate site is built by Ser227, Ser228, Asn229, and Ser271.

Belongs to the IspH family. It depends on [4Fe-4S] cluster as a cofactor.

It catalyses the reaction isopentenyl diphosphate + 2 oxidized [2Fe-2S]-[ferredoxin] + H2O = (2E)-4-hydroxy-3-methylbut-2-enyl diphosphate + 2 reduced [2Fe-2S]-[ferredoxin] + 2 H(+). The catalysed reaction is dimethylallyl diphosphate + 2 oxidized [2Fe-2S]-[ferredoxin] + H2O = (2E)-4-hydroxy-3-methylbut-2-enyl diphosphate + 2 reduced [2Fe-2S]-[ferredoxin] + 2 H(+). The protein operates within isoprenoid biosynthesis; dimethylallyl diphosphate biosynthesis; dimethylallyl diphosphate from (2E)-4-hydroxy-3-methylbutenyl diphosphate: step 1/1. Its pathway is isoprenoid biosynthesis; isopentenyl diphosphate biosynthesis via DXP pathway; isopentenyl diphosphate from 1-deoxy-D-xylulose 5-phosphate: step 6/6. Catalyzes the conversion of 1-hydroxy-2-methyl-2-(E)-butenyl 4-diphosphate (HMBPP) into a mixture of isopentenyl diphosphate (IPP) and dimethylallyl diphosphate (DMAPP). Acts in the terminal step of the DOXP/MEP pathway for isoprenoid precursor biosynthesis. The protein is 4-hydroxy-3-methylbut-2-enyl diphosphate reductase of Phocaeicola vulgatus (strain ATCC 8482 / DSM 1447 / JCM 5826 / CCUG 4940 / NBRC 14291 / NCTC 11154) (Bacteroides vulgatus).